Here is a 507-residue protein sequence, read N- to C-terminus: Pre-glycoprotein polyprotein GP complex (507 aa).

Residue Gly2 is the site of N-myristoyl glycine; by host attachment. The Extracellular portion of the chain corresponds to 2–17; sequence GQVVTFLQSLPEVINE. The chain crosses the membrane as a helical span at residues 18–33; it reads AINIALIAISIICILK. At 34–58 the chain is on the cytoplasmic side; it reads GLVNFWKCGVVQLAIFLCLAGRKCD. Cys57 lines the Zn(2+) pocket. Topologically, residues 59–445 are extracellular; that stretch reads GLMIDRRHEL…QGKTPIALTD (387 aa). Cystine bridges form between Cys86–Cys247, Cys292–Cys305, Cys314–Cys323, and Cys377–Cys398. N-linked (GlcNAc...) asparagine; by host glycans are attached at residues Asn89, Asn111, Asn179, and Asn240. N-linked (GlcNAc...) asparagine; by host glycosylation is found at Asn378, Asn386, Asn403, and Asn408. The chain crosses the membrane as a helical span at residues 446–466; sequence ICFWSLVFFTSTVFLQLVGIP. Residues 467 to 507 lie on the Cytoplasmic side of the membrane; the sequence is THRHLVGEGCPKPHRITSNSLCACGYYKIPKRPTRWVRKGK. His468, His470, Cys476, His480, Cys488, and Cys490 together coordinate Zn(2+).

This sequence belongs to the arenaviridae GPC protein family. Interacts with glycoprotein G2. Part of the GP complex (GP-C) together with glycoprotein G1 and glycoprotein G2. The GP-complex interacts with protein Z, which interacts with ribonucleocapsid; these interactions may induce virion budding. In terms of assembly, homotrimer; disulfide-linked. In pre-fusion state, G1 homotrimers bind G2 homotrimers via ionic interactions. Part of the GP complex (GP-C) together with glycoprotein G2 and the stable signal peptide. The GP-complex interacts with protein Z, which interacts with ribonucleocapsid; these interactions may induce virion budding. As to quaternary structure, homotrimer. Interacts with the stable signal peptide. In pre-fusion state, G2 homotrimers bind G1 homotrimers via ionic interactions. Part of the GP complex (GP-C) together with glycoprotein G1 and the stable signal peptide. Acidification in the endosome triggers rearrangements, which ultimately leads to a 6 helix bundle formed by the two heptad repeat domains (HR1 and HR2) in post-fusion state. The GP-complex interacts with protein Z, which interacts with ribonucleocapsid; these interactions may induce virion budding. Specific enzymatic cleavages in vivo yield mature proteins. GP-C polyprotein is cleaved in the endoplasmic reticulum by the host protease MBTPS1. Only cleaved glycoprotein is incorporated into virions. In terms of processing, the SSP remains stably associated with the GP complex following cleavage by signal peptidase and plays crucial roles in the trafficking of GP through the secretory pathway. Post-translationally, myristoylation is necessary for GP2-mediated fusion activity.

Its subcellular location is the virion membrane. It localises to the host endoplasmic reticulum membrane. It is found in the host Golgi apparatus membrane. The protein resides in the host cell membrane. Functions as a cleaved signal peptide that is retained as the third component of the GP complex (GP-C). Helps to stabilize the spike complex in its native conformation. The SSP is required for efficient glycoprotein expression, post-translational maturation cleavage of G1 and G2, glycoprotein transport to the cell surface plasma membrane, formation of infectious virus particles, and acid pH-dependent glycoprotein-mediated cell fusion. Functionally, forms the virion spikes together with glycoprotein G2. The glycoprotein spike trimers are connected to the underlying matrix. Interacts with the host receptor leading to virus endocytosis. Its function is as follows. Forms the virion spikes together with glycoprotein G1. The glycoprotein spike trimers are connected to the underlying matrix. Class I viral fusion protein that directs fusion of viral and host endosomal membranes, leading to delivery of the nucleocapsid into the cytoplasm. Membrane fusion is mediated by irreversible conformational changes induced by acidification. This chain is Pre-glycoprotein polyprotein GP complex, found in Allpahuayo mammarenavirus (isolate Rat/Peru/CLHP-2472/1997) (ALLV).